We begin with the raw amino-acid sequence, 474 residues long: Trifunctional enzyme subunit beta, mitochondrial (474 aa).

The transit peptide at 1–33 (MTILTYPFKNLPTASKWALRFSIRPLSCSSQLR) directs the protein to the mitochondrion. K72 is modified (N6-acetyllysine; alternate). Position 72 is an N6-succinyllysine; alternate (K72). The active-site Acyl-thioester intermediate is the C138. An intramembrane segment occupies 173–220 (IRHSRKMRKLMLDLNKAKSMGQRLSLISKFRFNFLAPELPAVSEFSTS). K188 is modified (N6-acetyllysine; alternate). K188 is modified (N6-succinyllysine; alternate). 3 positions are modified to N6-succinyllysine: K190, K272, and K291. Position 293 is an N6-acetyllysine; alternate (K293). At K293 the chain carries N6-succinyllysine; alternate. The residue at position 298 (K298) is an N6-acetyllysine. K332 carries the N6-acetyllysine; alternate modification. K332 bears the N6-succinyllysine; alternate mark. Residues K348 and K361 each carry the N6-acetyllysine modification. Residue C458 is the Proton donor/acceptor of the active site.

Belongs to the thiolase-like superfamily. Thiolase family. As to quaternary structure, heterotetramer of 2 alpha/HADHA and 2 beta/HADHB subunits; forms the mitochondrial trifunctional enzyme. Also purified as higher order heterooligomers including a 4 alpha/HADHA and 4 beta/HADHB heterooligomer which physiological significance remains unclear. The mitochondrial trifunctional enzyme interacts with MTLN. Interacts with RSAD2/viperin.

It is found in the mitochondrion. Its subcellular location is the mitochondrion inner membrane. The protein localises to the mitochondrion outer membrane. It localises to the endoplasmic reticulum. It carries out the reaction an acyl-CoA + acetyl-CoA = a 3-oxoacyl-CoA + CoA. The enzyme catalyses butanoyl-CoA + acetyl-CoA = 3-oxohexanoyl-CoA + CoA. The catalysed reaction is hexanoyl-CoA + acetyl-CoA = 3-oxooctanoyl-CoA + CoA. It catalyses the reaction octanoyl-CoA + acetyl-CoA = 3-oxodecanoyl-CoA + CoA. It carries out the reaction decanoyl-CoA + acetyl-CoA = 3-oxododecanoyl-CoA + CoA. The enzyme catalyses dodecanoyl-CoA + acetyl-CoA = 3-oxotetradecanoyl-CoA + CoA. The catalysed reaction is tetradecanoyl-CoA + acetyl-CoA = 3-oxohexadecanoyl-CoA + CoA. The protein operates within lipid metabolism; fatty acid beta-oxidation. Its function is as follows. Mitochondrial trifunctional enzyme catalyzes the last three of the four reactions of the mitochondrial beta-oxidation pathway. The mitochondrial beta-oxidation pathway is the major energy-producing process in tissues and is performed through four consecutive reactions breaking down fatty acids into acetyl-CoA. Among the enzymes involved in this pathway, the trifunctional enzyme exhibits specificity for long-chain fatty acids. Mitochondrial trifunctional enzyme is a heterotetrameric complex composed of two proteins, the trifunctional enzyme subunit alpha/HADHA carries the 2,3-enoyl-CoA hydratase and the 3-hydroxyacyl-CoA dehydrogenase activities, while the trifunctional enzyme subunit beta/HADHB described here bears the 3-ketoacyl-CoA thiolase activity. The chain is Trifunctional enzyme subunit beta, mitochondrial (HADHB) from Homo sapiens (Human).